We begin with the raw amino-acid sequence, 454 residues long: Bifunctional protein GlmU (454 aa).

The pyrophosphorylase stretch occupies residues 1-226 (MALNVVILAA…AIEVEGANNR (226 aa)). UDP-N-acetyl-alpha-D-glucosamine-binding positions include 8–11 (LAAG), Lys-22, Gln-73, 78–79 (GT), 100–102 (YGD), Gly-137, Glu-151, Asn-166, and Asn-224. Asp-102 contacts Mg(2+). Asn-224 is a binding site for Mg(2+). The segment at 227–247 (VQLAQLERAYQARAAEKLMLE) is linker. Residues 248–454 (GANLRDPARI…GWTRPVKQKK (207 aa)) are N-acetyltransferase. UDP-N-acetyl-alpha-D-glucosamine-binding residues include Arg-330 and Lys-348. His-360 functions as the Proton acceptor in the catalytic mechanism. Residues Tyr-363 and Asn-374 each coordinate UDP-N-acetyl-alpha-D-glucosamine. Acetyl-CoA contacts are provided by residues Ala-377, 383-384 (NY), Ser-402, Ala-420, and Arg-437.

It in the N-terminal section; belongs to the N-acetylglucosamine-1-phosphate uridyltransferase family. This sequence in the C-terminal section; belongs to the transferase hexapeptide repeat family. As to quaternary structure, homotrimer. Mg(2+) is required as a cofactor.

Its subcellular location is the cytoplasm. It carries out the reaction alpha-D-glucosamine 1-phosphate + acetyl-CoA = N-acetyl-alpha-D-glucosamine 1-phosphate + CoA + H(+). The catalysed reaction is N-acetyl-alpha-D-glucosamine 1-phosphate + UTP + H(+) = UDP-N-acetyl-alpha-D-glucosamine + diphosphate. The protein operates within nucleotide-sugar biosynthesis; UDP-N-acetyl-alpha-D-glucosamine biosynthesis; N-acetyl-alpha-D-glucosamine 1-phosphate from alpha-D-glucosamine 6-phosphate (route II): step 2/2. It participates in nucleotide-sugar biosynthesis; UDP-N-acetyl-alpha-D-glucosamine biosynthesis; UDP-N-acetyl-alpha-D-glucosamine from N-acetyl-alpha-D-glucosamine 1-phosphate: step 1/1. Its pathway is bacterial outer membrane biogenesis; LPS lipid A biosynthesis. Its function is as follows. Catalyzes the last two sequential reactions in the de novo biosynthetic pathway for UDP-N-acetylglucosamine (UDP-GlcNAc). The C-terminal domain catalyzes the transfer of acetyl group from acetyl coenzyme A to glucosamine-1-phosphate (GlcN-1-P) to produce N-acetylglucosamine-1-phosphate (GlcNAc-1-P), which is converted into UDP-GlcNAc by the transfer of uridine 5-monophosphate (from uridine 5-triphosphate), a reaction catalyzed by the N-terminal domain. This Shewanella loihica (strain ATCC BAA-1088 / PV-4) protein is Bifunctional protein GlmU.